Here is a 259-residue protein sequence, read N- to C-terminus: GTP cyclohydrolase FolE2 (259 aa).

Belongs to the GTP cyclohydrolase IV family.

The catalysed reaction is GTP + H2O = 7,8-dihydroneopterin 3'-triphosphate + formate + H(+). The protein operates within cofactor biosynthesis; 7,8-dihydroneopterin triphosphate biosynthesis; 7,8-dihydroneopterin triphosphate from GTP: step 1/1. Its function is as follows. Converts GTP to 7,8-dihydroneopterin triphosphate. The sequence is that of GTP cyclohydrolase FolE2 from Thermotoga neapolitana (strain ATCC 49049 / DSM 4359 / NBRC 107923 / NS-E).